We begin with the raw amino-acid sequence, 438 residues long: Glutamate-1-semialdehyde 2,1-aminomutase (438 aa).

Lys278 carries the post-translational modification N6-(pyridoxal phosphate)lysine.

This sequence belongs to the class-III pyridoxal-phosphate-dependent aminotransferase family. HemL subfamily. Homodimer. Requires pyridoxal 5'-phosphate as cofactor.

It is found in the cytoplasm. The catalysed reaction is (S)-4-amino-5-oxopentanoate = 5-aminolevulinate. Its pathway is porphyrin-containing compound metabolism; protoporphyrin-IX biosynthesis; 5-aminolevulinate from L-glutamyl-tRNA(Glu): step 2/2. The polypeptide is Glutamate-1-semialdehyde 2,1-aminomutase (Delftia acidovorans (strain DSM 14801 / SPH-1)).